The sequence spans 262 residues: tRNA (guanine-N(1)-)-methyltransferase (262 aa).

S-adenosyl-L-methionine is bound by residues glycine 111 and 130 to 135 (LGDFVL).

Belongs to the RNA methyltransferase TrmD family. As to quaternary structure, homodimer.

The protein resides in the cytoplasm. It catalyses the reaction guanosine(37) in tRNA + S-adenosyl-L-methionine = N(1)-methylguanosine(37) in tRNA + S-adenosyl-L-homocysteine + H(+). In terms of biological role, specifically methylates guanosine-37 in various tRNAs. The polypeptide is tRNA (guanine-N(1)-)-methyltransferase (Desulfitobacterium hafniense (strain Y51)).